Reading from the N-terminus, the 91-residue chain is Transcription factor ILI7 (91 aa).

The 55-residue stretch at 4 to 58 (RSRSRASSAARITDEQIGDLVSKLQALLPEARLRSNDRVPSARVLQETCSYIRSL) folds into the bHLH domain.

This sequence belongs to the bHLH protein family.

In terms of biological role, atypical and probable non DNA-binding bHLH transcription factor that integrates multiple signaling pathways to regulate cell elongation and plant development. This chain is Transcription factor ILI7 (ILI7), found in Oryza sativa subsp. indica (Rice).